Here is a 308-residue protein sequence, read N- to C-terminus: ATP synthase gamma chain (308 aa).

This sequence belongs to the ATPase gamma chain family. In terms of assembly, F-type ATPases have 2 components, CF(1) - the catalytic core - and CF(0) - the membrane proton channel. CF(1) has five subunits: alpha(3), beta(3), gamma(1), delta(1), epsilon(1). CF(0) has three main subunits: a, b and c.

It is found in the cell membrane. Its function is as follows. Produces ATP from ADP in the presence of a proton gradient across the membrane. The gamma chain is believed to be important in regulating ATPase activity and the flow of protons through the CF(0) complex. The protein is ATP synthase gamma chain of Mycobacteroides abscessus (strain ATCC 19977 / DSM 44196 / CCUG 20993 / CIP 104536 / JCM 13569 / NCTC 13031 / TMC 1543 / L948) (Mycobacterium abscessus).